The primary structure comprises 263 residues: MKNYKGYLIDLDGTMYLGTDEIDGAAQFIDYLNNHQIPHLYVTNNSTKTPEEVTQKLKEMNIDAKPEEVVTSALATANYISDEKSDATVYMLGGNGLRTALTEAGLTVKDDENVDYVAIGLDENVTYEKLAVATLAVRKGARFISTNPDVSIPKERGFLPGNGAITSVVSVSTGQAPQFIGKPEPVIMDIALDILKLDKSDVAMVGDLYDTDIMSGINVGVDTIHVQTGVTTYEELKEKDQQPTYSFKDLNVAISELEKNAQK.

This sequence belongs to the HAD-like hydrolase superfamily. NagD family. The cofactor is Mg(2+).

Catalyzes the dephosphorylation of 2-6 carbon acid sugars in vitro. The sequence is that of Acid sugar phosphatase (nagD) from Staphylococcus haemolyticus (strain JCSC1435).